The chain runs to 358 residues: 3-dehydroquinate synthase (358 aa).

NAD(+)-binding positions include Asp70–Lys75, Gly104–Asp108, Thr128–Thr129, Lys141, Lys150, and Cys168–Thr171. Glu183, His246, and His263 together coordinate Zn(2+).

The protein belongs to the sugar phosphate cyclases superfamily. Dehydroquinate synthase family. Co(2+) is required as a cofactor. Requires Zn(2+) as cofactor. It depends on NAD(+) as a cofactor.

It is found in the cytoplasm. The catalysed reaction is 7-phospho-2-dehydro-3-deoxy-D-arabino-heptonate = 3-dehydroquinate + phosphate. The protein operates within metabolic intermediate biosynthesis; chorismate biosynthesis; chorismate from D-erythrose 4-phosphate and phosphoenolpyruvate: step 2/7. Functionally, catalyzes the conversion of 3-deoxy-D-arabino-heptulosonate 7-phosphate (DAHP) to dehydroquinate (DHQ). In Shewanella woodyi (strain ATCC 51908 / MS32), this protein is 3-dehydroquinate synthase.